We begin with the raw amino-acid sequence, 87 residues long: U3-theraphotoxin-Hhn1a 13 (87 aa).

The signal sequence occupies residues 1-24 (MVNMKASMFLTSAGLVPLFVVCYA). Residues 25 to 52 (SESEEKEFPKEMLSSIFAVDNDFKQEER) constitute a propeptide that is removed on maturation. Disulfide bonds link C54–C67, C61–C72, and C66–C79.

The protein belongs to the neurotoxin 10 (Hwtx-1) family. 51 (Hntx-8) subfamily. Hntx-8 sub-subfamily. Expressed by the venom gland.

It is found in the secreted. Ion channel inhibitor. The polypeptide is U3-theraphotoxin-Hhn1a 13 (Cyriopagopus hainanus (Chinese bird spider)).